The chain runs to 181 residues: Inner membrane-spanning protein YciB (181 aa).

The next 5 membrane-spanning stretches (helical) occupy residues 10 to 30 (LVIF…GALI), 50 to 70 (MHLI…VFHD), 80 to 100 (IIYS…KSIL), 118 to 138 (VTWY…YVAF), and 148 to 168 (FKVF…VFYL).

This sequence belongs to the YciB family.

It localises to the cell inner membrane. Functionally, plays a role in cell envelope biogenesis, maintenance of cell envelope integrity and membrane homeostasis. This is Inner membrane-spanning protein YciB from Shewanella baltica (strain OS223).